A 445-amino-acid polypeptide reads, in one-letter code: 3-phosphoshikimate 1-carboxyvinyltransferase (445 aa).

The segment at 1 to 25 (MTDSNQPMPLQARKSGALHGTARVP) is disordered. The 3-phosphoshikimate site is built by Lys-28, Ser-29, and Arg-33. Position 28 (Lys-28) interacts with phosphoenolpyruvate. Positions 101 and 129 each coordinate phosphoenolpyruvate. Residues Ser-175, Gln-177, Asp-328, and Lys-355 each contribute to the 3-phosphoshikimate site. Gln-177 is a binding site for phosphoenolpyruvate. Asp-328 serves as the catalytic Proton acceptor. Residues Arg-359 and Arg-402 each coordinate phosphoenolpyruvate.

The protein belongs to the EPSP synthase family. Monomer.

It localises to the cytoplasm. The catalysed reaction is 3-phosphoshikimate + phosphoenolpyruvate = 5-O-(1-carboxyvinyl)-3-phosphoshikimate + phosphate. The protein operates within metabolic intermediate biosynthesis; chorismate biosynthesis; chorismate from D-erythrose 4-phosphate and phosphoenolpyruvate: step 6/7. Its function is as follows. Catalyzes the transfer of the enolpyruvyl moiety of phosphoenolpyruvate (PEP) to the 5-hydroxyl of shikimate-3-phosphate (S3P) to produce enolpyruvyl shikimate-3-phosphate and inorganic phosphate. In Rhodopseudomonas palustris (strain ATCC BAA-98 / CGA009), this protein is 3-phosphoshikimate 1-carboxyvinyltransferase.